Reading from the N-terminus, the 439-residue chain is Ribosomal protein uS12 methylthiotransferase RimO (439 aa).

The 113-residue stretch at 7-119 (KQLCLISLGC…IDIMIAKKQN (113 aa)) folds into the MTTase N-terminal domain. Residues Cys-16, Cys-50, Cys-82, Cys-151, Cys-155, and Cys-158 each contribute to the [4Fe-4S] cluster site. Positions 137–368 (TGSSVHAYVK…ALKHQNHSFK (232 aa)) constitute a Radical SAM core domain.

This sequence belongs to the methylthiotransferase family. RimO subfamily. It depends on [4Fe-4S] cluster as a cofactor.

It localises to the cytoplasm. It carries out the reaction L-aspartate(89)-[ribosomal protein uS12]-hydrogen + (sulfur carrier)-SH + AH2 + 2 S-adenosyl-L-methionine = 3-methylsulfanyl-L-aspartate(89)-[ribosomal protein uS12]-hydrogen + (sulfur carrier)-H + 5'-deoxyadenosine + L-methionine + A + S-adenosyl-L-homocysteine + 2 H(+). In terms of biological role, catalyzes the methylthiolation of an aspartic acid residue of ribosomal protein uS12. The protein is Ribosomal protein uS12 methylthiotransferase RimO of Helicobacter pylori (strain P12).